The chain runs to 512 residues: Protein disulfide-isomerase (512 aa).

The N-terminal stretch at 1–24 (MAKNVAIFGLLFSLLLLVPSQIFA) is a signal peptide. Positions 25-144 (EESSTDAKEF…IVEYLKKQSG (120 aa)) constitute a Thioredoxin 1 domain. Residues C62 and C65 each act as nucleophile in the active site. A disulfide bridge links C62 with C65. The N-linked (GlcNAc...) asparagine glycan is linked to N278. The Thioredoxin 2 domain occupies 357 to 485 (YKDGKVEPFV…IIEFIEKNKD (129 aa)). Residues C407 and C410 each act as nucleophile in the active site. Residues C407 and C410 are joined by a disulfide bond. The segment covering 487 to 496 (TGAAHQEVEQ) has biased composition (basic and acidic residues). The segment at 487–512 (TGAAHQEVEQPKAAAQPEAEQPKDEL) is disordered. The Prevents secretion from ER motif lies at 509–512 (KDEL).

The protein belongs to the protein disulfide isomerase family.

The protein localises to the endoplasmic reticulum lumen. The catalysed reaction is Catalyzes the rearrangement of -S-S- bonds in proteins.. Its function is as follows. Participates in the folding of proteins containing disulfide bonds, may be involved in glycosylation, prolyl hydroxylation and triglyceride transfer. In Medicago sativa (Alfalfa), this protein is Protein disulfide-isomerase (PDI).